A 219-amino-acid polypeptide reads, in one-letter code: Envelope protein US9 homolog (219 aa).

Residues Met1 to Thr193 are Intravirion-facing. A Di-leucine internalization motif motif is present at residues Leu145–Leu146. The tract at residues Asp153–Glu168 is acidic. Phosphoserine; by host CK2 is present on residues Ser163 and Ser165. A helical; Signal-anchor for type II membrane protein membrane pass occupies residues Val194–Leu214. Over Ala215 to Pro219 the chain is Virion surface.

It belongs to the alphaherpesvirinae envelope protein US9 family. Phosphorylated on serines within the acidic cluster. Phosphorylation determines whether endocytosed viral US9 traffics to the trans-Golgi network or recycles to the cell membrane.

It is found in the virion membrane. The protein localises to the host Golgi apparatus membrane. Its subcellular location is the host smooth endoplasmic reticulum membrane. It localises to the host cell membrane. Functionally, essential for the anterograde spread of the infection throughout the host nervous system. Together with the gE/gI heterodimer, US9 is involved in the sorting and transport of viral structural components toward axon tips. This is Envelope protein US9 homolog from Equine herpesvirus 1 (strain Kentucky A) (EHV-1).